The following is a 172-amino-acid chain: MSAQVSLELHHRISQFLFHEASLLDDWKFRDWLAQLDEEIRYTMRTTVNAQTRDRRKGIQPPTTWIFNDTKDQLERRIARLETGMAWAEEPPSRTRHLISNCQVNETDIPNVFAVRVNYLLYRAQKERDETFYVGTRFDKVRRLEDDNWRLLERDIVLDQAVITSHNLSVLF.

It belongs to the bacterial ring-hydroxylating dioxygenase beta subunit family. As to quaternary structure, this dioxygenase system consists of four proteins: the two subunits of the hydroxylase component (HcaE and HcaF), a ferredoxin (HcaC) and a ferredoxin reductase (HcaD).

The enzyme catalyses 3-phenylpropanoate + NADH + O2 + H(+) = 3-(cis-5,6-dihydroxycyclohexa-1,3-dien-1-yl)propanoate + NAD(+). The catalysed reaction is (E)-cinnamate + NADH + O2 + H(+) = (2E)-3-(cis-5,6-dihydroxycyclohexa-1,3-dien-1-yl)prop-2-enoate + NAD(+). Its pathway is aromatic compound metabolism; 3-phenylpropanoate degradation. Functionally, part of the multicomponent 3-phenylpropionate dioxygenase. Converts 3-phenylpropionic acid (PP) and cinnamic acid (CI) into 3-phenylpropionate-dihydrodiol (PP-dihydrodiol) and cinnamic acid-dihydrodiol (CI-dihydrodiol), respectively. The polypeptide is 3-phenylpropionate/cinnamic acid dioxygenase subunit beta (Escherichia coli O17:K52:H18 (strain UMN026 / ExPEC)).